The sequence spans 570 residues: MKASQFFISTLKEAPAEAAFASHKLMIRAGLIKANASGLYTWMPMGLRVLRKVENVVREEMARAGSVELLMPVVQPAELWQESGRWEFYGKELLRLKDRHERDFCMGPTCEEVIADIVRKEINSYKQLPKNFYHIQTKFRDEVRPRFGVMRAREFVMKDAYSFHADYASLQATYDAMYDAHCRIFTRLGLAFRPVAADTGSIGGTGSHEFQVLAESGEDVIAYSDTSDYAANIELAPTLPLKGERAAAQAVLTKVHTPNVKTIESLVEFLNIPVEQTLKSIVVEGENEGELVLLLLRGDHEFNDIKAEKLAGVKSPLTMASPAAIVEQFGANGGSLGPVGFTGKVYADFATEKGADWVIGANEDDYHYTGFNFGRDAAEPEFVDLRNVVEGDESPDGQGRLKLARGIEVGHVFQLRGKYTQAMNVSFLDNNGKSQIMEMGCYGIGITRVVAAAIEQNNDEKGIIWTKAMAPFEVVIVPMNYKKSDTVREAADRIYAELLAAGADVLLDDRDERAGVLLNDSELLGIPHRIVIGDRALKEGNVEYAERRGNEAQAVAIGEIVARVTASLNA.

It belongs to the class-II aminoacyl-tRNA synthetase family. ProS type 1 subfamily. As to quaternary structure, homodimer.

It localises to the cytoplasm. The enzyme catalyses tRNA(Pro) + L-proline + ATP = L-prolyl-tRNA(Pro) + AMP + diphosphate. Catalyzes the attachment of proline to tRNA(Pro) in a two-step reaction: proline is first activated by ATP to form Pro-AMP and then transferred to the acceptor end of tRNA(Pro). As ProRS can inadvertently accommodate and process non-cognate amino acids such as alanine and cysteine, to avoid such errors it has two additional distinct editing activities against alanine. One activity is designated as 'pretransfer' editing and involves the tRNA(Pro)-independent hydrolysis of activated Ala-AMP. The other activity is designated 'posttransfer' editing and involves deacylation of mischarged Ala-tRNA(Pro). The misacylated Cys-tRNA(Pro) is not edited by ProRS. The polypeptide is Proline--tRNA ligase (Neisseria gonorrhoeae (strain ATCC 700825 / FA 1090)).